Reading from the N-terminus, the 960-residue chain is Leucine--tRNA ligase (960 aa).

The short motif at 71-82 is the 'HIGH' region element; the sequence is PYPSGAGLHVGH. The 'KMSKS' region motif lies at 729-733; it reads KMGKS. K732 is a binding site for ATP.

The protein belongs to the class-I aminoacyl-tRNA synthetase family.

Its subcellular location is the cytoplasm. The catalysed reaction is tRNA(Leu) + L-leucine + ATP = L-leucyl-tRNA(Leu) + AMP + diphosphate. The chain is Leucine--tRNA ligase from Corynebacterium diphtheriae (strain ATCC 700971 / NCTC 13129 / Biotype gravis).